The chain runs to 463 residues: Autophagy-related protein 36 (463 aa).

The segment at 5 to 45 (CSICLEVLVDKEAFTEPCLHYYHNECIKEWTKRANTCPKCR) adopts an RING-type; atypical zinc-finger fold. The PHD-type zinc-finger motif lies at 85 to 131 (TNLCALCEDPSTSLIYCESCGGSFHFNCIGIGDELDSEWCCPLCGMF). The span at 229–242 (TQNSQSSEFSTENN) shows a compositional bias: polar residues. The tract at residues 229–281 (TQNSQSSEFSTENNVVPLKNTHELGRKLKKPRRASGIKKNVVERSSSHQSTQI) is disordered. Residues 255 to 264 (KLKKPRRASG) show a composition bias toward basic residues.

As to quaternary structure, interacts with ATG28.

In terms of biological role, micropexophagy-specific protein required for efficient micropexophagic apparatus (MIPA) formation but not for general autophagy. The protein is Autophagy-related protein 36 (ATG35) of Komagataella phaffii (strain GS115 / ATCC 20864) (Yeast).